The primary structure comprises 484 residues: Glutamate--tRNA ligase (484 aa).

The 'HIGH' region signature appears at 12–22; the sequence is PSPTGEPHVGT. The short motif at 253–257 is the 'KMSKS' region element; that stretch reads KLSKR. Lys-256 serves as a coordination point for ATP.

The protein belongs to the class-I aminoacyl-tRNA synthetase family. Glutamate--tRNA ligase type 1 subfamily. Monomer.

Its subcellular location is the cytoplasm. It carries out the reaction tRNA(Glu) + L-glutamate + ATP = L-glutamyl-tRNA(Glu) + AMP + diphosphate. Its function is as follows. Catalyzes the attachment of glutamate to tRNA(Glu) in a two-step reaction: glutamate is first activated by ATP to form Glu-AMP and then transferred to the acceptor end of tRNA(Glu). The protein is Glutamate--tRNA ligase of Rhizobium leguminosarum bv. trifolii (strain WSM2304).